A 422-amino-acid chain; its full sequence is Phagosome assembly factor 1 (422 aa).

This sequence belongs to the PHAF1 family. In terms of assembly, interacts with BCAS3; the interaction is requrired for the association with the phagophore.

It localises to the cytoplasm. The protein localises to the preautophagosomal structure. Plays a regulatory role in autophagic activity. In complex with BCAS3, associates with the autophagosome formation site during both non-selective and selective autophagy. The polypeptide is Phagosome assembly factor 1 (Mus musculus (Mouse)).